The primary structure comprises 341 residues: Flap endonuclease 1 (341 aa).

Positions 1–98 (MGVQIGELIP…RELEKRREAR (98 aa)) are N-domain. The Mg(2+) site is built by Asp-27, Asp-80, Glu-152, Glu-154, Asp-173, Asp-175, and Asp-236. An I-domain region spans residues 116 to 258 (EAKKYAMRAT…KALTIVKRTK (143 aa)). Positions 330–338 (KQSTLESWF) are interaction with PCNA.

The protein belongs to the XPG/RAD2 endonuclease family. FEN1 subfamily. In terms of assembly, interacts with PCNA. PCNA stimulates the nuclease activity without altering cleavage specificity. Mg(2+) is required as a cofactor.

Structure-specific nuclease with 5'-flap endonuclease and 5'-3' exonuclease activities involved in DNA replication and repair. During DNA replication, cleaves the 5'-overhanging flap structure that is generated by displacement synthesis when DNA polymerase encounters the 5'-end of a downstream Okazaki fragment. Binds the unpaired 3'-DNA end and kinks the DNA to facilitate 5' cleavage specificity. Cleaves one nucleotide into the double-stranded DNA from the junction in flap DNA, leaving a nick for ligation. Also involved in the base excision repair (BER) pathway. Acts as a genome stabilization factor that prevents flaps from equilibrating into structures that lead to duplications and deletions. Also possesses 5'-3' exonuclease activity on nicked or gapped double-stranded DNA. This is Flap endonuclease 1 from Thermococcus onnurineus (strain NA1).